The primary structure comprises 230 residues: Ribosomal RNA large subunit methyltransferase E (230 aa).

A compositionally biased stretch (gly residues) spans 1–13 (MSGSGGKGGGRGG). Positions 1–22 (MSGSGGKGGGRGGLHVRVKTAK) are disordered. The S-adenosyl-L-methionine site is built by G81, W83, D100, D116, and D140. The Proton acceptor role is filled by K180.

The protein belongs to the class I-like SAM-binding methyltransferase superfamily. RNA methyltransferase RlmE family.

The protein resides in the cytoplasm. It carries out the reaction uridine(2552) in 23S rRNA + S-adenosyl-L-methionine = 2'-O-methyluridine(2552) in 23S rRNA + S-adenosyl-L-homocysteine + H(+). In terms of biological role, specifically methylates the uridine in position 2552 of 23S rRNA at the 2'-O position of the ribose in the fully assembled 50S ribosomal subunit. The polypeptide is Ribosomal RNA large subunit methyltransferase E (Sphingopyxis alaskensis (strain DSM 13593 / LMG 18877 / RB2256) (Sphingomonas alaskensis)).